The sequence spans 252 residues: 1-(5-phosphoribosyl)-5-[(5-phosphoribosylamino)methylideneamino] imidazole-4-carboxamide isomerase (252 aa).

D8 functions as the Proton acceptor in the catalytic mechanism. The active-site Proton donor is the D129.

Belongs to the HisA/HisF family.

It localises to the cytoplasm. It catalyses the reaction 1-(5-phospho-beta-D-ribosyl)-5-[(5-phospho-beta-D-ribosylamino)methylideneamino]imidazole-4-carboxamide = 5-[(5-phospho-1-deoxy-D-ribulos-1-ylimino)methylamino]-1-(5-phospho-beta-D-ribosyl)imidazole-4-carboxamide. Its pathway is amino-acid biosynthesis; L-histidine biosynthesis; L-histidine from 5-phospho-alpha-D-ribose 1-diphosphate: step 4/9. The polypeptide is 1-(5-phosphoribosyl)-5-[(5-phosphoribosylamino)methylideneamino] imidazole-4-carboxamide isomerase (Synechococcus sp. (strain RCC307)).